Reading from the N-terminus, the 300-residue chain is Acetylglutamate kinase (300 aa).

Residues 68-69 (GG), Arg90, and Asn194 contribute to the substrate site.

This sequence belongs to the acetylglutamate kinase family. ArgB subfamily.

It localises to the cytoplasm. It carries out the reaction N-acetyl-L-glutamate + ATP = N-acetyl-L-glutamyl 5-phosphate + ADP. The protein operates within amino-acid biosynthesis; L-arginine biosynthesis; N(2)-acetyl-L-ornithine from L-glutamate: step 2/4. Its function is as follows. Catalyzes the ATP-dependent phosphorylation of N-acetyl-L-glutamate. The sequence is that of Acetylglutamate kinase from Methanocaldococcus jannaschii (strain ATCC 43067 / DSM 2661 / JAL-1 / JCM 10045 / NBRC 100440) (Methanococcus jannaschii).